The chain runs to 240 residues: Aliphatic sulfonates import ATP-binding protein SsuB 2 (240 aa).

In terms of domain architecture, ABC transporter spans 2–218 (VRTRELRRGF…RHSAPEFIHA (217 aa)). 34 to 41 (GRSGSGKS) is a binding site for ATP.

Belongs to the ABC transporter superfamily. Aliphatic sulfonates importer (TC 3.A.1.17.2) family. In terms of assembly, the complex is composed of two ATP-binding proteins (SsuB), two transmembrane proteins (SsuC) and a solute-binding protein (SsuA).

It is found in the cell membrane. The catalysed reaction is ATP + H2O + aliphatic sulfonate-[sulfonate-binding protein]Side 1 = ADP + phosphate + aliphatic sulfonateSide 2 + [sulfonate-binding protein]Side 1.. Part of the ABC transporter complex SsuABC involved in aliphatic sulfonates import. Responsible for energy coupling to the transport system. This Nocardia farcinica (strain IFM 10152) protein is Aliphatic sulfonates import ATP-binding protein SsuB 2.